Reading from the N-terminus, the 137-residue chain is uncharacterized protein (137 aa).

The interval M1 to P26 is disordered.

This is an uncharacterized protein from Homo sapiens (Human).